Reading from the N-terminus, the 429-residue chain is Enolase (429 aa).

(2R)-2-phosphoglycerate is bound at residue glutamine 162. Glutamate 204 (proton donor) is an active-site residue. Positions 241, 288, and 315 each coordinate Mg(2+). (2R)-2-phosphoglycerate contacts are provided by lysine 340, arginine 369, serine 370, and lysine 391. Lysine 340 functions as the Proton acceptor in the catalytic mechanism.

It belongs to the enolase family. It depends on Mg(2+) as a cofactor.

Its subcellular location is the cytoplasm. It localises to the secreted. It is found in the cell surface. It catalyses the reaction (2R)-2-phosphoglycerate = phosphoenolpyruvate + H2O. It participates in carbohydrate degradation; glycolysis; pyruvate from D-glyceraldehyde 3-phosphate: step 4/5. Catalyzes the reversible conversion of 2-phosphoglycerate (2-PG) into phosphoenolpyruvate (PEP). It is essential for the degradation of carbohydrates via glycolysis. The chain is Enolase from Christiangramia forsetii (strain DSM 17595 / CGMCC 1.15422 / KT0803) (Gramella forsetii).